A 524-amino-acid polypeptide reads, in one-letter code: Protein tweety homolog 3 (524 aa).

Residues 1–42 (MAGVSYAAPWWVSLLHRLPHFDLRWEATSSQFRPEDADYQQA) are Extracellular-facing. The chain crosses the membrane as a helical span at residues 43 to 63 (LLLLGATALACLALDLLFLLF). The Cytoplasmic portion of the chain corresponds to 64–86 (YSFWLCCRRRKTDEHLDADCCCT). Residues 87-107 (AWCVIITTLVCSAGIAVGFYG) traverse the membrane as a helical segment. Residues 108–211 (NGETSDGIHR…VDLYDWYRWL (104 aa)) lie on the Extracellular side of the membrane. Ca(2+) contacts are provided by Glu-110 and Asp-113. Residues Asn-126 and Asn-144 are each glycosylated (N-linked (GlcNAc...) asparagine). The chain crosses the membrane as a helical span at residues 212 to 232 (GYLGLLLLDVIICLLVLVGLI). Residues 233-236 (RSSK) lie on the Cytoplasmic side of the membrane. The chain crosses the membrane as a helical span at residues 237–257 (GILVGVCLLGVLALVISWGAL). The Extracellular portion of the chain corresponds to 258–386 (GLELAVSVGS…LTGFCYDGVE (129 aa)). 2 disulfides stabilise this stretch: Cys-271/Cys-381 and Cys-299/Cys-366. Asn-351 carries N-linked (GlcNAc...) asparagine glycosylation. Residues 387-407 (GLIYLALFSFVTALMFSSIVC) traverse the membrane as a helical segment. Over 408–524 (SIPHTWQQKR…PRPDSSGSGH (117 aa)) the chain is Cytoplasmic. Disordered regions lie at residues 413-435 (WQQK…RQAH) and 485-524 (RCEN…GSGH). Position 496 is a phosphoserine (Ser-496). The short motif at 498–501 (PPSY) is the PY-motif; mediates interaction with NEDD4L element. The span at 501–524 (YTSSMRAKYLATSQPRPDSSGSGH) shows a compositional bias: polar residues. Phosphoserine occurs at positions 504 and 522.

This sequence belongs to the tweety family. As to quaternary structure, homotetramer; disulfide-linked. Forms cis-homodimers in the presence of Ca(2+). Interacts with NEDD4L. Ubiquitinated by NEDD4L. In terms of processing, N-glycosylated. As to expression, expressed in excitable tissues. Expressed in the brain, heart, skeletal muscle, colon, spleen, kidney and peripheral blood leukocytes. Also expressed in fat, the pancreas, thymus, and uterus.

It localises to the cell membrane. The enzyme catalyses chloride(in) = chloride(out). The catalysed reaction is L-glutamate(out) = L-glutamate(in). Inhibited by (4-[(2-butyl-6,7-dichloro-2- cyclopentyl-2,3-dihydro-1-oxo-1H-inden-5-yl)oxy]butanoic acid), genistein and PD98059 (MEK1 inhibitor). Its function is as follows. Calcium-independent, swelling-dependent volume-regulated anion channel (VRAC-swell) which plays a pivotal role in the process of regulatory volume decrease (RVD) in the brain through the efflux of anions like chloride and organic osmolytes like glutamate. Probable large-conductance Ca(2+)-activated chloride channel. This is Protein tweety homolog 3 (Ttyh3) from Mus musculus (Mouse).